Consider the following 850-residue polypeptide: Bifunctional uridylyltransferase/uridylyl-removing enzyme (850 aa).

Residues 1–317 (MSARPFADLR…LFPVVAPPLP (317 aa)) form a uridylyltransferase region. The tract at residues 318 to 673 (IDDDFQLRAG…ARLSPAGEGI (356 aa)) is uridylyl-removing. In terms of domain architecture, HD spans 436–558 (VDEHILTVLR…VGDTRRLDAL (123 aa)). ACT domains follow at residues 674-755 (QVMV…AVQP) and 783-850 (VLSI…GVLG).

This sequence belongs to the GlnD family. The cofactor is Mg(2+).

The catalysed reaction is [protein-PII]-L-tyrosine + UTP = [protein-PII]-uridylyl-L-tyrosine + diphosphate. It carries out the reaction [protein-PII]-uridylyl-L-tyrosine + H2O = [protein-PII]-L-tyrosine + UMP + H(+). Uridylyltransferase (UTase) activity is inhibited by glutamine, while glutamine activates uridylyl-removing (UR) activity. Functionally, modifies, by uridylylation and deuridylylation, the PII regulatory proteins (GlnB and homologs), in response to the nitrogen status of the cell that GlnD senses through the glutamine level. Under low glutamine levels, catalyzes the conversion of the PII proteins and UTP to PII-UMP and PPi, while under higher glutamine levels, GlnD hydrolyzes PII-UMP to PII and UMP (deuridylylation). Thus, controls uridylylation state and activity of the PII proteins, and plays an important role in the regulation of nitrogen assimilation and metabolism. The sequence is that of Bifunctional uridylyltransferase/uridylyl-removing enzyme from Thiobacillus denitrificans (strain ATCC 25259 / T1).